The sequence spans 195 residues: Protein GrpE (195 aa).

The segment at 1 to 60 (MAKDEEKNSQASAAPNEGEVKAKQEQTSAKEPAAKAGETEKVADLQKQVEELTKQLDDQK) is disordered. Positions 37–60 (GETEKVADLQKQVEELTKQLDDQK) are enriched in basic and acidic residues.

The protein belongs to the GrpE family. As to quaternary structure, homodimer.

The protein resides in the cytoplasm. Participates actively in the response to hyperosmotic and heat shock by preventing the aggregation of stress-denatured proteins, in association with DnaK and GrpE. It is the nucleotide exchange factor for DnaK and may function as a thermosensor. Unfolded proteins bind initially to DnaJ; upon interaction with the DnaJ-bound protein, DnaK hydrolyzes its bound ATP, resulting in the formation of a stable complex. GrpE releases ADP from DnaK; ATP binding to DnaK triggers the release of the substrate protein, thus completing the reaction cycle. Several rounds of ATP-dependent interactions between DnaJ, DnaK and GrpE are required for fully efficient folding. This is Protein GrpE from Limosilactobacillus fermentum (strain NBRC 3956 / LMG 18251) (Lactobacillus fermentum).